A 1895-amino-acid polypeptide reads, in one-letter code: Diacylglycerol kinase eta (1895 aa).

The span at 1 to 10 (MAHLKLDTLH) shows a compositional bias: basic and acidic residues. The disordered stretch occupies residues 1–37 (MAHLKLDTLHVQRSPRGSRRSSPSSGRSSACSSGSIS). Over residues 20–37 (RSSPSSGRSSACSSGSIS) the composition is skewed to low complexity. The 94-residue stretch at 82–175 (AIIKEGFLLK…WLGSLKTATA (94 aa)) folds into the PH domain. 2 consecutive Phorbol-ester/DAG-type zinc fingers follow at residues 195-245 (HHHW…IANC) and 267-318 (PHQW…AVAC). In terms of domain architecture, DAGKc spans 349-485 (GNFSPLLVFV…DRWSIMVFEK (137 aa)). Disordered regions lie at residues 781-801 (ANID…ENTP), 1012-1053 (TTLC…MARL), 1113-1137 (QHRG…GANL), and 1172-1191 (PNTI…HGQD). Basic and acidic residues predominate over residues 1113 to 1128 (QHRGGDNDSDYPEHEQ). Polar residues predominate over residues 1172–1184 (PNTILTTSTSPTK). In terms of domain architecture, SAM spans 1832-1895 (WSVNEVVTWL…LQAIKDLSEN (64 aa)).

The protein belongs to the eukaryotic diacylglycerol kinase family.

It localises to the cytoplasm. It catalyses the reaction a 1,2-diacyl-sn-glycerol + ATP = a 1,2-diacyl-sn-glycero-3-phosphate + ADP + H(+). Phosphorylates diacylglycerol (DAG) to generate phosphatidic acid (PA). The chain is Diacylglycerol kinase eta from Drosophila melanogaster (Fruit fly).